The following is a 1020-amino-acid chain: Mastermind-like protein 1 (1020 aa).

A required for interaction with NOTCH proteins region spans residues 1–97 (MVLPTCPMAE…PAPASAPAAA (97 aa)). At S45 the chain carries Phosphoserine. Residues 67–76 (KAKRAGKHRQ) are compositionally biased toward basic residues. The tract at residues 67 to 191 (KAKRAGKHRQ…TAGKHSLGLD (125 aa)) is disordered. The span at 77 to 99 (PPAAATAPVAAPAPASAPAAARL) shows a compositional bias: low complexity. Residues 100–122 (DAADGPEHGRPVAHLHDTVKRSL) are compositionally biased toward basic and acidic residues. The segment covering 124–133 (SAASPQNGDQ) has biased composition (polar residues). A phosphoserine mark is found at S127, S310, S321, and S367. 6 disordered regions span residues 335-522 (GASS…YGNT), 575-598 (PFRS…APAA), 663-686 (EKQQ…QSTF), 725-748 (SMGP…RGVA), 794-866 (QNAS…NPFT), and 888-959 (AMPS…RPGL). The span at 344-369 (DSPSLGSSQTLFHTTSQPGVDNSSPN) shows a compositional bias: polar residues. Residues 373–383 (ASAQAQSAQRA) are compositionally biased toward low complexity. The span at 399–410 (ELSSAHQLQQIA) shows a compositional bias: polar residues. Residues 419 to 435 (LQNPQQAAPAPGPGQLA) are compositionally biased toward low complexity. The segment covering 491-515 (PSHSNLLSHQSPSNLNQNPVNNQGS) has biased composition (polar residues). Low complexity predominate over residues 588–598 (PSSVPVAAPAA). Positions 794–818 (QNASTSAAYGQNSLGSASLSQQHSK) are enriched in polar residues. The residue at position 827 (K827) is an N6-acetyllysine. Residues 837 to 864 (MGSQNASWQHQGMPNLSSQTSGNSSVNP) show a composition bias toward polar residues. The segment covering 911-920 (SAQQRNSAPA) has biased composition (low complexity). S1019 carries the phosphoserine modification.

Belongs to the mastermind family. As to quaternary structure, interacts (via N-terminus) with NOTCH1, NOTCH2, NOTCH3 and NOTCH4 (via ankyrin repeat region). Interacts (via N-terminus) with p53 (via DNA-binding region). Forms a DNA-binding complex with Notch proteins and RBPSUH/RBP-J kappa/CBF1. Also binds CREBBP/CBP and CDK8. Forms a complex with PRAG1, NOTCH1 and MAML1, in a MAML1-dependent manner. At E9.5, strongly expressed in the telencephalon, first branchial arch, forelimb buds and somites. By 10.5 dpc, continuously expressed in brain and spinal cord. Also expressed in first and second branchial arches and limb buds. By 11.5 dpc, expression in CNS is weak but increases in mesodermal tissues. At 14.5 dpc, detected in epithelial cells in trachea, esophagus and proximal and distal tubules of the developing lungs.

Its subcellular location is the nucleus speckle. Acts as a transcriptional coactivator for NOTCH proteins. Has been shown to amplify NOTCH-induced transcription of HES1. Enhances phosphorylation and proteolytic turnover of the NOTCH intracellular domain in the nucleus through interaction with CDK8. Binds to CREBBP/CBP which promotes nucleosome acetylation at NOTCH enhancers and activates transcription. Induces phosphorylation and localization of CREBBP to nuclear foci. Plays a role in hematopoietic development by regulating NOTCH-mediated lymphoid cell fate decisions. The protein is Mastermind-like protein 1 of Mus musculus (Mouse).